Reading from the N-terminus, the 95-residue chain is Fungal defensin plectasin (95 aa).

Residues 1-23 (MQFTTILSIGITVFGLLNTGAFA) form the signal peptide. Positions 24–55 (APQPVPEAYAVSDPEAHPDDFAGMDANQLQKR) are excised as a propeptide. Beta-D-GlcNAc-(1-&gt;4)-Mur2Ac(oyl-L-Ala-gamma-D-Glu-L-Lys-D-Ala-D-Ala)-di-trans,octa-cis-undecaprenyl diphosphate is bound by residues Phe-57, Gly-58, and Cys-59. Disulfide bonds link Cys-59-Cys-85, Cys-70-Cys-92, and Cys-74-Cys-94. Positions 61 to 64 (GPWD) are binds to membrane interface. Asp-67, His-73, Tyr-84, Ala-86, Gly-88, Cys-92, and Lys-93 together coordinate beta-D-GlcNAc-(1-&gt;4)-Mur2Ac(oyl-L-Ala-gamma-D-Glu-L-Lys-D-Ala-D-Ala)-di-trans,octa-cis-undecaprenyl diphosphate. The tract at residues 86–92 (AKGGFVC) is binds to membrane interface.

Belongs to the invertebrate defensin family. Type 2 subfamily.

It is found in the secreted. It localises to the host cell membrane. Functionally, antimicrobial peptide that potently acts against several species of Gram-positive bacteria. It selectively inhibits peptidoglycan biosynthesis through complex formation with the cell wall precursor lipid II (1:1 molar ratio) thus inhibiting cell wall synthesis. It does not disrupt cell membranes. Is especially active against numerous clinical isolates of S.pneumoniae, including all 90 different serotypes and isolates resistant to clinically used antibiotics. In vitro, shows considerable selectivity for bacteria over mammalian cells. The peptide synthesized in D-amino acids does not show antibacterial activity. In vitro, acts on voltage-gated potassium channels by moderately inhibiting mammalian Kv1.3/KCNA3 (IC(50)=2.8 uM), and moderately inhibiting others potassium channels. This chain is Fungal defensin plectasin (DEF), found in Pseudoplectania nigrella (Ebony cup).